Reading from the N-terminus, the 181-residue chain is Succinate dehydrogenase [ubiquinone] cytochrome b small subunit, mitochondrial (181 aa).

The transit peptide at Met1–Ser31 directs the protein to the mitochondrion. Residues Leu32 to Ser66 are Mitochondrial matrix-facing. The helical transmembrane segment at Tyr67–Leu88 threads the bilayer. Topologically, residues Thr89–Asp98 are mitochondrial intermembrane. A helical transmembrane segment spans residues Ser99–Thr118. Cys109 is a binding site for heme. Residues Asp119–Gly127 lie on the Mitochondrial matrix side of the membrane. Tyr120 provides a ligand contact to a ubiquinone. The chain crosses the membrane as a helical span at residues Val128–Ile148. The Mitochondrial intermembrane portion of the chain corresponds to Tyr149–Lys181.

It belongs to the CybS family. As to quaternary structure, forms part of complex II containing four subunits: a flavoprotein (FP), an iron-sulfur protein (IP) and a cytochrome b composed of a large and a small subunit.

It localises to the mitochondrion inner membrane. It participates in carbohydrate metabolism; tricarboxylic acid cycle. Functionally, membrane-anchoring subunit of succinate dehydrogenase (SDH) that is involved in system II of the mitochondrial electron transport chain and is responsible for transferring electrons from succinate to ubiquinone (coenzyme Q). SDH3 and SDH4 form the membrane dimer that anchors the catalytic dimer formed by SDH1 and SDH2 to the matrix surface of the mitochondrial inner membrane. Electrons originating from the catalytic dimer enter the membrane dimer for ubiquinone reduction. The polypeptide is Succinate dehydrogenase [ubiquinone] cytochrome b small subunit, mitochondrial (SDH4) (Saccharomyces cerevisiae (strain ATCC 204508 / S288c) (Baker's yeast)).